The following is a 182-amino-acid chain: Methyl-CpG-binding domain-containing protein 5 (182 aa).

Disordered regions lie at residues 1-56 (MSNG…GTVD) and 80-126 (HGTP…KPLN). Residues 25–101 (KRATPGDDNW…ENGDSHSEHS (77 aa)) enclose the MBD domain. The span at 92–105 (ENGDSHSEHSEGRG) shows a compositional bias: basic and acidic residues. Over residues 106–115 (SARRQTKSNK) the composition is skewed to basic residues.

As to quaternary structure, homodimer and heterodimer with MBD6. Interacts with DDM1 via its MBD domain. Mostly expressed in flowers, and, to a lower extent, in seedlings, buds, stems and mature seeds, but barely in roots, exclusively in root meristem cells at tips (at protein level).

Its subcellular location is the nucleus. The protein resides in the chromosome. Its function is as follows. Transcriptional regulator that binds CpG islands in promoters where the DNA is methylated at position 5 of cytosine within CpG dinucleotides. In addition, binds specifically methylated m(5)CpNpN but not m(5)CpNpG (N is A, T or C). Plays probably a role in gene silencing. This chain is Methyl-CpG-binding domain-containing protein 5 (MBD5), found in Arabidopsis thaliana (Mouse-ear cress).